A 276-amino-acid chain; its full sequence is Secretagogin (276 aa).

EF-hand domains follow at residues 12–47 (LDAA…LLAK), 105–140 (DNSV…LFLH), 149–184 (ELEE…QENF), 197–232 (ERKR…MMEL), and 240–276 (VDLD…KINP). Residues Asp118, Asp120, Ser122, Glu129, Asp162, Asn164, Asp166, Arg168, Asp173, Asp210, Ser212, Thr214, Glu221, Asp254, Asn256, Asp258, Lys260, and Glu265 each contribute to the Ca(2+) site.

Highly expressed in pancreas, in particular in pancreatic islets and pancreatic beta-cells. Detected in prostate, adrenal gland, small intestine, stomach and thyroid (at protein level).

It is found in the cytoplasm. It localises to the secreted. The protein localises to the cytoplasmic vesicle. The protein resides in the secretory vesicle membrane. This Rattus norvegicus (Rat) protein is Secretagogin (Scgn).